A 59-amino-acid chain; its full sequence is Photosystem II reaction center protein K (59 aa).

The propeptide occupies 1-22 (MLNIFSLICLNSALYPSSLFFA). A helical membrane pass occupies residues 38-58 (MPVIPLFFFLLAFVWQAAVSF).

This sequence belongs to the PsbK family. PSII is composed of 1 copy each of membrane proteins PsbA, PsbB, PsbC, PsbD, PsbE, PsbF, PsbH, PsbI, PsbJ, PsbK, PsbL, PsbM, PsbT, PsbX, PsbY, PsbZ, Psb30/Ycf12, at least 3 peripheral proteins of the oxygen-evolving complex and a large number of cofactors. It forms dimeric complexes.

The protein resides in the plastid. Its subcellular location is the chloroplast thylakoid membrane. One of the components of the core complex of photosystem II (PSII). PSII is a light-driven water:plastoquinone oxidoreductase that uses light energy to abstract electrons from H(2)O, generating O(2) and a proton gradient subsequently used for ATP formation. It consists of a core antenna complex that captures photons, and an electron transfer chain that converts photonic excitation into a charge separation. In Lactuca sativa (Garden lettuce), this protein is Photosystem II reaction center protein K.